Reading from the N-terminus, the 94-residue chain is Putative pterin-4-alpha-carbinolamine dehydratase (94 aa).

The protein belongs to the pterin-4-alpha-carbinolamine dehydratase family.

The enzyme catalyses (4aS,6R)-4a-hydroxy-L-erythro-5,6,7,8-tetrahydrobiopterin = (6R)-L-erythro-6,7-dihydrobiopterin + H2O. The sequence is that of Putative pterin-4-alpha-carbinolamine dehydratase from Mycobacterium leprae (strain Br4923).